The primary structure comprises 388 residues: Integrase (388 aa).

The Core-binding (CB) domain occupies 70–151; sequence YTVADAVNDW…CLNRAVKRAM (82 aa). A Tyr recombinase domain is found at 173–379; it reads RPSKALTFAQ…VIQTGAVVMD (207 aa). Catalysis depends on residues R208, K249, R330, and H353. Y363 functions as the O-(3'-phospho-DNA)-tyrosine intermediate in the catalytic mechanism.

The protein belongs to the 'phage' integrase family.

Required for integration of pSAM2. In Streptomyces ambofaciens, this protein is Integrase (int).